The sequence spans 613 residues: DNA polymerase II small subunit (613 aa).

The protein belongs to the DNA polymerase delta/II small subunit family. As to quaternary structure, heterodimer of a large subunit and a small subunit.

The enzyme catalyses DNA(n) + a 2'-deoxyribonucleoside 5'-triphosphate = DNA(n+1) + diphosphate. It catalyses the reaction Exonucleolytic cleavage in the 3'- to 5'-direction to yield nucleoside 5'-phosphates.. In terms of biological role, possesses two activities: a DNA synthesis (polymerase) and an exonucleolytic activity that degrades single-stranded DNA in the 3' to 5' direction. Has a template-primer preference which is characteristic of a replicative DNA polymerase. This Pyrococcus furiosus (strain ATCC 43587 / DSM 3638 / JCM 8422 / Vc1) protein is DNA polymerase II small subunit (polB).